The following is a 482-amino-acid chain: Malvidin galactosylase UGT88C3 (482 aa).

The Proton acceptor role is filled by His16. Catalysis depends on Asp117, which acts as the Charge relay. Positions 279, 345, 349, 366, 370, 371, and 374 each coordinate UDP.

It belongs to the UDP-glycosyltransferase family. As to expression, highly expressed in leaves, sheaths, pistils and embryos, observed in stems, stem nodes and panicles, and present at low levels in roots.

It is found in the endoplasmic reticulum. It localises to the nucleus. It catalyses the reaction malvidin + UDP-alpha-D-galactose = malvidin 3-O-beta-D-galactoside + UDP + H(+). It participates in pigment biosynthesis; anthocyanin biosynthesis. Its function is as follows. UDP-glycosyltransferase which uses UDP-galactose and malvidin as substrates to catalyze the biosynthesis of malvidin 3-O-galactoside, an anthocyanin conferring purple pigmentation. The protein is Malvidin galactosylase UGT88C3 of Oryza sativa subsp. japonica (Rice).